We begin with the raw amino-acid sequence, 250 residues long: Acetoacetate decarboxylase 1 (250 aa).

The Schiff-base intermediate with acetoacetate role is filled by lysine 120.

This sequence belongs to the ADC family.

It carries out the reaction acetoacetate + H(+) = acetone + CO2. Its function is as follows. Catalyzes the conversion of acetoacetate to acetone and carbon dioxide. The chain is Acetoacetate decarboxylase 1 from Bradyrhizobium diazoefficiens (strain JCM 10833 / BCRC 13528 / IAM 13628 / NBRC 14792 / USDA 110).